A 387-amino-acid polypeptide reads, in one-letter code: 3-ketoacyl-CoA thiolase (387 aa).

Cysteine 91 functions as the Acyl-thioester intermediate in the catalytic mechanism. Active-site proton acceptor residues include histidine 343 and cysteine 373.

It belongs to the thiolase-like superfamily. Thiolase family. As to quaternary structure, heterotetramer of two alpha chains (FadB) and two beta chains (FadA).

The protein resides in the cytoplasm. The catalysed reaction is an acyl-CoA + acetyl-CoA = a 3-oxoacyl-CoA + CoA. It functions in the pathway lipid metabolism; fatty acid beta-oxidation. Functionally, catalyzes the final step of fatty acid oxidation in which acetyl-CoA is released and the CoA ester of a fatty acid two carbons shorter is formed. Involved in the aerobic and anaerobic degradation of long-chain fatty acids. The polypeptide is 3-ketoacyl-CoA thiolase (Escherichia coli O6:H1 (strain CFT073 / ATCC 700928 / UPEC)).